A 92-amino-acid polypeptide reads, in one-letter code: MGRSLKKGPFIADHLLSKIEKLNDKNEKQVIKTWSRASTILPLMVGHTIAVHNGRQHVPVFISEQMVGHKLGEFAPTRTYRGHGKSDKKAGR.

The protein belongs to the universal ribosomal protein uS19 family.

Functionally, protein S19 forms a complex with S13 that binds strongly to the 16S ribosomal RNA. This is Small ribosomal subunit protein uS19 from Trichormus variabilis (strain ATCC 29413 / PCC 7937) (Anabaena variabilis).